The primary structure comprises 361 residues: Peptide chain release factor 1 (361 aa).

Residue Gln-235 is modified to N5-methylglutamine.

This sequence belongs to the prokaryotic/mitochondrial release factor family. Methylated by PrmC. Methylation increases the termination efficiency of RF1.

It localises to the cytoplasm. Its function is as follows. Peptide chain release factor 1 directs the termination of translation in response to the peptide chain termination codons UAG and UAA. This is Peptide chain release factor 1 from Rhodopseudomonas palustris (strain ATCC BAA-98 / CGA009).